We begin with the raw amino-acid sequence, 388 residues long: Fibrinogen- and Ig-binding protein (388 aa).

The first 41 residues, 1-41 (MSKTNPNKLYSLRKLKTGTASVAVDLTVLGTGLANTTDVKA), serve as a signal peptide directing secretion. 4 D repeats span residues 288 to 293 (EKLEAE), 294 to 299 (AKALKE), 302 to 307 (AKQAEE), and 309 to 314 (AKLKAD). The disordered stretch occupies residues 308–362 (LAKLKADKASGAQKPDTKPGNKEVPTRPSQTRTNTNKAPMAQTKRQLPSTGEETT). A compositionally biased stretch (basic and acidic residues) spans 322 to 332 (PDTKPGNKEVP). Residues 334-362 (RPSQTRTNTNKAPMAQTKRQLPSTGEETT) show a composition bias toward polar residues. Positions 354-358 (LPSTG) match the LPXTG sorting signal motif. The residue at position 357 (Thr357) is a Pentaglycyl murein peptidoglycan amidated threonine. Residues 358–388 (GEETTNPFFTAAALTVIASAGVLALKRKEEN) constitute a propeptide, removed by sortase.

It is found in the secreted. Its subcellular location is the cell wall. Functionally, binds IgG molecules of the Ig1, Ig2 and Ig4 subclasses, and also binds fibrinogen. The sequence is that of Fibrinogen- and Ig-binding protein (mrp4) from Streptococcus pyogenes.